We begin with the raw amino-acid sequence, 118 residues long: Large ribosomal subunit protein bL20 (118 aa).

It belongs to the bacterial ribosomal protein bL20 family.

Its function is as follows. Binds directly to 23S ribosomal RNA and is necessary for the in vitro assembly process of the 50S ribosomal subunit. It is not involved in the protein synthesizing functions of that subunit. This chain is Large ribosomal subunit protein bL20, found in Caldicellulosiruptor saccharolyticus (strain ATCC 43494 / DSM 8903 / Tp8T 6331).